Here is a 171-residue protein sequence, read N- to C-terminus: UPF0316 protein EAT1b_0871 (171 aa).

Helical transmembrane passes span 4 to 24 (ILLI…RTIM), 32 to 52 (IAGL…GIVF), and 57 to 77 (TVGM…GGFV).

It belongs to the UPF0316 family.

The protein resides in the cell membrane. This chain is UPF0316 protein EAT1b_0871, found in Exiguobacterium sp. (strain ATCC BAA-1283 / AT1b).